Reading from the N-terminus, the 59-residue chain is Large ribosomal subunit protein uL30 (59 aa).

It belongs to the universal ribosomal protein uL30 family. In terms of assembly, part of the 50S ribosomal subunit.

This chain is Large ribosomal subunit protein uL30, found in Lactococcus lactis subsp. lactis (strain IL1403) (Streptococcus lactis).